Here is a 146-residue protein sequence, read N- to C-terminus: Large ribosomal subunit protein bL21 (146 aa).

The interval 103 to 146 (DGKSPTIGPRPKKEKAVEPVEGASDDKPRRAAKKTAAKTAEDAD) is disordered. Residues 116–131 (EKAVEPVEGASDDKPR) show a composition bias toward basic and acidic residues.

This sequence belongs to the bacterial ribosomal protein bL21 family. Part of the 50S ribosomal subunit. Contacts protein L20.

Its function is as follows. This protein binds to 23S rRNA in the presence of protein L20. This Nitrobacter winogradskyi (strain ATCC 25391 / DSM 10237 / CIP 104748 / NCIMB 11846 / Nb-255) protein is Large ribosomal subunit protein bL21.